A 136-amino-acid polypeptide reads, in one-letter code: MRTLWIVAVWLMGVEGNLFQFGKMIKHKTGKSALLSYSGNPCYCGWGGQGPPQDATDHCCFVHDCCYGEENACYPKTAFTLKFENQIIICDEDPCNYAVCMCDRVAAICGGENVATSDAKYLFYRSMGCEEESVQC.

Residues 1 to 16 form the signal peptide; it reads MRTLWIVAVWLMGVEG. Disulfide bonds link cysteine 42–cysteine 129, cysteine 44–cysteine 60, cysteine 59–cysteine 109, cysteine 65–cysteine 136, cysteine 66–cysteine 102, cysteine 73–cysteine 95, and cysteine 90–cysteine 100. Ca(2+) contacts are provided by tyrosine 43, glycine 45, and glycine 47. Residue histidine 63 is part of the active site. Aspartate 64 is a binding site for Ca(2+). Residue aspartate 103 is part of the active site.

The protein belongs to the phospholipase A2 family. Group II subfamily. D49 sub-subfamily. Requires Ca(2+) as cofactor. In terms of processing, glycosylated (2.5%). As to expression, expressed by the venom gland.

It is found in the secreted. The enzyme catalyses a 1,2-diacyl-sn-glycero-3-phosphocholine + H2O = a 1-acyl-sn-glycero-3-phosphocholine + a fatty acid + H(+). In terms of biological role, snake venom phospholipase A2 that inhibits blood coagulation and platelet aggregation induced by ADP and arachidonic acid. Inhibits tumor cell adhesion and migration in a dose-dependent manner. Abolishes the attachment of human brain microvascular endothelial cells (HBMEC) to fibrinogen (IC(50)=0.2 uM) and dramatically reduces its adhesion to fibronectin (IC(50)=0.3 uM), whereas no effect is observed on type I collagen, vitronectin or laminin 1. Also blocks the cell migration toward fibronectin and fibrinogen. These effects are not dependent of the catalytic activity, but are mediated by alpha-5/beta-1 (ITGA5/ITGB1) and alpha-v-containing (ITGAV) integrins. Also shows anti-angiogenic activity in chicken chorioallantoix membrane assay. Has a relatively high enzymatic activity. PLA2 catalyzes the calcium-dependent hydrolysis of the 2-acyl groups in 3-sn-phosphoglycerides. The sequence is that of Acidic phospholipase A2 CC-PLA2-2 from Cerastes cerastes (Horned desert viper).